Here is a 123-residue protein sequence, read N- to C-terminus: MDRVPFCCLLFVGLLNPLLSFPVTDTGEMSLQLPVLEENALRALEELERTALLQTLRQTVGTEAEGSLGQADPSAETPTPRGSLRKALTGQDSNTVLSRLLARTRKQRKQHGTAPECFWKYCI.

Residues 1-20 (MDRVPFCCLLFVGLLNPLLS) form the signal peptide. A propeptide spanning residues 21–104 (FPVTDTGEMS…TVLSRLLART (84 aa)) is cleaved from the precursor. Residues 63–91 (EAEGSLGQADPSAETPTPRGSLRKALTGQ) form a disordered region. Cysteine 117 and cysteine 122 are joined by a disulfide.

This sequence belongs to the urotensin-2 family. As to expression, brain specific.

It localises to the secreted. Highly potent vasoconstrictor. This is Urotensin-2 (Uts2) from Rattus norvegicus (Rat).